A 150-amino-acid polypeptide reads, in one-letter code: Large ribosomal subunit protein bL9 (150 aa).

The protein belongs to the bacterial ribosomal protein bL9 family.

Its function is as follows. Binds to the 23S rRNA. The chain is Large ribosomal subunit protein bL9 from Streptococcus mutans serotype c (strain ATCC 700610 / UA159).